We begin with the raw amino-acid sequence, 605 residues long: Elongation factor 4 (605 aa).

Residues 9–192 form the tr-type G domain; it reads HHIRNFCIIA…AIVKRVPAPS (184 aa). Residues 21–26 and 139–142 each bind GTP; these read DHGKST and NKID.

Belongs to the TRAFAC class translation factor GTPase superfamily. Classic translation factor GTPase family. LepA subfamily.

It localises to the cell inner membrane. It carries out the reaction GTP + H2O = GDP + phosphate + H(+). Required for accurate and efficient protein synthesis under certain stress conditions. May act as a fidelity factor of the translation reaction, by catalyzing a one-codon backward translocation of tRNAs on improperly translocated ribosomes. Back-translocation proceeds from a post-translocation (POST) complex to a pre-translocation (PRE) complex, thus giving elongation factor G a second chance to translocate the tRNAs correctly. Binds to ribosomes in a GTP-dependent manner. The polypeptide is Elongation factor 4 (Chlorobium phaeobacteroides (strain DSM 266 / SMG 266 / 2430)).